A 575-amino-acid chain; its full sequence is Sclareol synthase, chloroplastic (575 aa).

Residues 1 to 51 (MSLAFNVGVTPFSGQRVGSRKEKFPVQGFPVTTPNRSRLIVNCSLTTIDFM) constitute a chloroplast transit peptide. Mg(2+)-binding residues include Asp329, Asp333, Asn473, Ser477, and Glu481. Residues 329 to 333 (DDFFD) carry the DDXXD motif motif.

It belongs to the terpene synthase family.

It localises to the plastid. It is found in the chloroplast. The catalysed reaction is 8-hydroxycopalyl diphosphate + H2O = sclareol + diphosphate. The protein operates within secondary metabolite biosynthesis; terpenoid biosynthesis. Functionally, involved in the biosynthesis of labdane-type diterpenoid including sclareol, a diterpene-diol that is used as fragrance and flavoring, and has anticancer effects (able to kill leukemic and colon cancer cells by apoptosis). Sclareol can also be used as synthesis precursor of ambergris substitution fragance products such as ambrox. Terpene synthase that catalyzes the conversion of 8-hydroxy-copalyl diphosphate to sclareol. The polypeptide is Sclareol synthase, chloroplastic (Salvia sclarea (Clary sage)).